Here is a 271-residue protein sequence, read N- to C-terminus: Mannosyl-3-phosphoglycerate phosphatase (271 aa).

The Nucleophile role is filled by aspartate 13. Positions 13, 15, and 214 each coordinate Mg(2+).

This sequence belongs to the HAD-like hydrolase superfamily. MPGP family. The cofactor is Mg(2+).

It is found in the cytoplasm. It catalyses the reaction 2-O-(alpha-D-mannosyl)-3-phosphoglycerate + H2O = (2R)-2-O-(alpha-D-mannosyl)-glycerate + phosphate. The chain is Mannosyl-3-phosphoglycerate phosphatase (yedP) from Shigella dysenteriae serotype 1 (strain Sd197).